Reading from the N-terminus, the 541-residue chain is MSSNSDTGDLQESLKHGLTPIGAGLPDRHGSPIPARGRLVMLPKVETEALGLARSHGEQGQMPENMQVSQFKMVNYSYDEDLEELCPVCGDKVSGYHYGLLTCESCKGFFKRTVQNNKRYTCIENQNCQIDKTQRKRCPYCRFQKCLSVGMKLEAVRADRMRGGRNKFGPMYKRDRALKQQKKALIRANGLKLEAMSQVIQAMPSDLTISSAIQNIHSASKGLPLNHAALPPTDYDRSPFVTSPISMTMPPHGSLQGYQTYGHFPSRAIKSEYPDPYTSSPESIMGYSYMDSYQTSSPASIPHLILELLKCEPDEPQVQAKIMAYLQQEQANRSKHEKLSTFGLMCKMADQTLFSIVEWARSSIFFRELKVDDQMKLLQNCWSELLILDHIYRQVVHGKEGSIFLVTGQQVDYSIIASQAGATLNNLMSHAQELVAKLRSLQFDQREFVCLKFLVLFSLDVKNLENFQLVEGVQEQVNAALLDYTMCNYPQQTEKFGQLLLRLPEIRAISMQAEEYLYYKHLNGDVPYNNLLIEMLHAKRA.

The segment covering 1–10 has biased composition (polar residues); the sequence is MSSNSDTGDL. Positions 1-35 are disordered; it reads MSSNSDTGDLQESLKHGLTPIGAGLPDRHGSPIPA. The segment at residues 83–154 is a DNA-binding region (nuclear receptor); the sequence is EELCPVCGDK…KCLSVGMKLE (72 aa). Residues Cys86, Cys89, Cys103, Cys106, Cys122, Cys128, Cys138, and Cys141 each contribute to the Zn(2+) site. 2 NR C4-type zinc fingers span residues 86 to 106 and 122 to 146; these read CPVC…CESC and CIEN…FQKC. Positions 152–167 are C-terminal extension (CTE); that stretch reads KLEAVRADRMRGGRNK. The short motif at 168–187 is the FTZ-F1 box element; it reads FGPMYKRDRALKQQKKALIR. Lys270 participates in a covalent cross-link: Glycyl lysine isopeptide (Lys-Gly) (interchain with G-Cter in SUMO1). Positions 300 to 539 constitute an NR LBD domain; it reads SIPHLILELL…NLLIEMLHAK (240 aa). A phospholipid derivative contacts are provided by residues 421–424, Tyr516, and Lys520; that span reads GATL. Positions 528-539 are AF-2; it reads YNNLLIEMLHAK.

This sequence belongs to the nuclear hormone receptor family. NR5 subfamily. As to quaternary structure, monomer; Binds DNA as a monomer. Interacts with nuclear receptor corepressors NR0B1 and NR0B2; repressing NR5A2 nuclear receptor activity. Interacts with nuclear receptor coactivators CTNNB1, PPARGC1A and NCOA2; interaction takes place following ligand-binding and promotes target gene activation. Interacts (when sumoylated) with GPS2; interaction with GPS2 onto hepatic acute phase protein promoters prevents N-Cor corepressor complex dissociation. Interacts with HNF1A. Interacts with GRIP1. Sumoylated by SUMO1 at Lys-270 during the hepatic acute phase response, leading to promote interaction with GPS2 and prevent N-Cor corepressor complex dissociation. Abundantly expressed in pancreas, less in liver, very low levels in heart and lung. Expressed in the Hep-G2 cell line. Isoform 1 and isoform 2 seem to be present in fetal and adult liver and Hep-G2 cells.

The protein localises to the nucleus. It is found in the chromosome. Activated by synthetic agonists RR-RJW100, SR-RJW100, endo sulfamide compound 6N and GSK8470. Its function is as follows. Orphan nuclear receptor that binds DNA as a monomer to the 5'-TCAAGGCCA-3' sequence and controls expression of target genes: regulates key biological processes, such as early embryonic development, cholesterol and bile acid synthesis pathways, as well as liver and pancreas morphogenesis. Ligand-binding causes conformational change which causes recruitment of coactivators, promoting target gene activation. The specific ligand is unknown, but specific phospholipids, such as phosphatidylethanolamine, phosphatidylserine, dilauroyl phosphatidylcholine and diundecanoyl phosphatidylcholine can act as ligand in vitro. Acts as a pioneer transcription factor, which unwraps target DNA from histones and elicits local opening of closed chromatin. Plays a central role during preimplantation stages of embryonic development. Plays a minor role in zygotic genome activation (ZGA) by regulating a small set of two-cell stage genes. Plays a major role in morula development (2-16 cells embryos) by acting as a master regulator at the 8-cell stage, controlling expression of lineage-specifying transcription factors and genes involved in mitosis, telomere maintenance and DNA repair. Zygotic NR5A2 binds to both closed and open chromatin with other transcription factors, often at SINE B1/Alu repeats DNA elements, promoting chromatin accessibility at nearby regulatory regions. Also involved in the epiblast stage of development and embryonic stem cell pluripotency, by promoting expression of POU5F1/OCT4. Regulates other processes later in development, such as formation of connective tissue in lower jaw and middle ear, neural stem cell differentiation, ovarian follicle development and Sertoli cell differentiation. Involved in exocrine pancreas development and acinar cell differentiation. Acts as an essential transcriptional regulator of lipid metabolism. Key regulator of cholesterol 7-alpha-hydroxylase gene (CYP7A) expression in liver. Also acts as a negative regulator of inflammation in different organs, such as, liver and pancreas. Protects against intestinal inflammation via its ability to regulate glucocorticoid production. Plays an anti-inflammatory role during the hepatic acute phase response by acting as a corepressor: inhibits the hepatic acute phase response by preventing dissociation of the N-Cor corepressor complex. Acts as a regulator of immunity by promoting lymphocyte T-cell development, proliferation and effector functions. Also involved in resolution of endoplasmic reticulum stress in the liver. In constrast to isoform 1 and isoform 2, does not induce cholesterol 7-alpha-hydroxylase gene (CYP7A) promoter activity. Functionally, (Microbial infection) Plays a crucial role for hepatitis B virus gene transcription and DNA replication. Mechanistically, synergistically cooperates with HNF1A to up-regulate the activity of one of the critical cis-elements in the hepatitis B virus genome enhancer II (ENII). The protein is Nuclear receptor subfamily 5 group A member 2 of Homo sapiens (Human).